Consider the following 394-residue polypeptide: Queuine tRNA-ribosyltransferase (394 aa).

Residue aspartate 95 is the Proton acceptor of the active site. Substrate is bound by residues 95–99 (DSGGF), aspartate 149, glutamine 190, and glycine 217. The RNA binding stretch occupies residues 248-254 (GVGTPID). Aspartate 267 (nucleophile) is an active-site residue. Positions 272–276 (TRNAR) are RNA binding; important for wobble base 34 recognition. The Zn(2+) site is built by cysteine 305, cysteine 307, cysteine 310, and histidine 337. The interval 375-394 (NDANETVGATESTESTESTE) is disordered.

The protein belongs to the queuine tRNA-ribosyltransferase family. In terms of assembly, homodimer. Within each dimer, one monomer is responsible for RNA recognition and catalysis, while the other monomer binds to the replacement base PreQ1. Zn(2+) is required as a cofactor.

It carries out the reaction 7-aminomethyl-7-carbaguanine + guanosine(34) in tRNA = 7-aminomethyl-7-carbaguanosine(34) in tRNA + guanine. The protein operates within tRNA modification; tRNA-queuosine biosynthesis. Its function is as follows. Catalyzes the base-exchange of a guanine (G) residue with the queuine precursor 7-aminomethyl-7-deazaguanine (PreQ1) at position 34 (anticodon wobble position) in tRNAs with GU(N) anticodons (tRNA-Asp, -Asn, -His and -Tyr). Catalysis occurs through a double-displacement mechanism. The nucleophile active site attacks the C1' of nucleotide 34 to detach the guanine base from the RNA, forming a covalent enzyme-RNA intermediate. The proton acceptor active site deprotonates the incoming PreQ1, allowing a nucleophilic attack on the C1' of the ribose to form the product. After dissociation, two additional enzymatic reactions on the tRNA convert PreQ1 to queuine (Q), resulting in the hypermodified nucleoside queuosine (7-(((4,5-cis-dihydroxy-2-cyclopenten-1-yl)amino)methyl)-7-deazaguanosine). The polypeptide is Queuine tRNA-ribosyltransferase (Sorangium cellulosum (strain So ce56) (Polyangium cellulosum (strain So ce56))).